A 441-amino-acid polypeptide reads, in one-letter code: Ribosomal protein uS12 methylthiotransferase RimO (441 aa).

One can recognise an MTTase N-terminal domain in the interval 8 to 118 (PKIGFVSLGC…VLEHVHHYVP (111 aa)). Residues Cys17, Cys53, Cys82, Cys150, Cys154, and Cys157 each contribute to the [4Fe-4S] cluster site. The Radical SAM core domain maps to 136-373 (LTPRHYAYLK…MQLQQQISAE (238 aa)). One can recognise a TRAM domain in the interval 376–441 (QEKVGREILV…DEYDLWGSRV (66 aa)).

It belongs to the methylthiotransferase family. RimO subfamily. [4Fe-4S] cluster is required as a cofactor.

It is found in the cytoplasm. It carries out the reaction L-aspartate(89)-[ribosomal protein uS12]-hydrogen + (sulfur carrier)-SH + AH2 + 2 S-adenosyl-L-methionine = 3-methylsulfanyl-L-aspartate(89)-[ribosomal protein uS12]-hydrogen + (sulfur carrier)-H + 5'-deoxyadenosine + L-methionine + A + S-adenosyl-L-homocysteine + 2 H(+). Functionally, catalyzes the methylthiolation of an aspartic acid residue of ribosomal protein uS12. The polypeptide is Ribosomal protein uS12 methylthiotransferase RimO (Citrobacter koseri (strain ATCC BAA-895 / CDC 4225-83 / SGSC4696)).